Reading from the N-terminus, the 220-residue chain is Deoxyribose-phosphate aldolase (220 aa).

The active-site Proton donor/acceptor is the aspartate 92. Residue lysine 155 is the Schiff-base intermediate with acetaldehyde of the active site. The Proton donor/acceptor role is filled by lysine 184.

The protein belongs to the DeoC/FbaB aldolase family. DeoC type 1 subfamily.

The protein localises to the cytoplasm. It carries out the reaction 2-deoxy-D-ribose 5-phosphate = D-glyceraldehyde 3-phosphate + acetaldehyde. It participates in carbohydrate degradation; 2-deoxy-D-ribose 1-phosphate degradation; D-glyceraldehyde 3-phosphate and acetaldehyde from 2-deoxy-alpha-D-ribose 1-phosphate: step 2/2. Functionally, catalyzes a reversible aldol reaction between acetaldehyde and D-glyceraldehyde 3-phosphate to generate 2-deoxy-D-ribose 5-phosphate. The chain is Deoxyribose-phosphate aldolase from Natranaerobius thermophilus (strain ATCC BAA-1301 / DSM 18059 / JW/NM-WN-LF).